We begin with the raw amino-acid sequence, 717 residues long: Polyribonucleotide nucleotidyltransferase (717 aa).

Residues D496 and D502 each coordinate Mg(2+). The KH domain occupies 563–622 (PRLLTIKIDPDLIGLVIGPGGKTVKGITEQTGTKIDIDDDGTVTISSTDGEQAEKAKRLI). In terms of domain architecture, S1 motif spans 632–700 (GEVYLGRVTR…SKGRLNLTRL (69 aa)).

It belongs to the polyribonucleotide nucleotidyltransferase family. Mg(2+) is required as a cofactor.

The protein localises to the cytoplasm. The catalysed reaction is RNA(n+1) + phosphate = RNA(n) + a ribonucleoside 5'-diphosphate. Involved in mRNA degradation. Catalyzes the phosphorolysis of single-stranded polyribonucleotides processively in the 3'- to 5'-direction. In Microcystis aeruginosa (strain NIES-843 / IAM M-2473), this protein is Polyribonucleotide nucleotidyltransferase.